The primary structure comprises 640 residues: Threonine--tRNA ligase (640 aa).

Residues 1 to 60 (MKITFPDGAVKEFEPGVSTADIAASISPGLKKKALAGKLNGELLDLVTPIHEDGAIEIVT) form the TGS domain. Residues 241–538 (DHRKLGKELE…LIEEYKGAFP (298 aa)) form a catalytic region. Residues Cys-334, His-385, and His-515 each contribute to the Zn(2+) site.

Belongs to the class-II aminoacyl-tRNA synthetase family. In terms of assembly, homodimer. Zn(2+) is required as a cofactor.

The protein resides in the cytoplasm. The catalysed reaction is tRNA(Thr) + L-threonine + ATP = L-threonyl-tRNA(Thr) + AMP + diphosphate + H(+). Functionally, catalyzes the attachment of threonine to tRNA(Thr) in a two-step reaction: L-threonine is first activated by ATP to form Thr-AMP and then transferred to the acceptor end of tRNA(Thr). Also edits incorrectly charged L-seryl-tRNA(Thr). The protein is Threonine--tRNA ligase of Listeria welshimeri serovar 6b (strain ATCC 35897 / DSM 20650 / CCUG 15529 / CIP 8149 / NCTC 11857 / SLCC 5334 / V8).